The sequence spans 426 residues: Protein arginine N-methyltransferase 2 (426 aa).

2 disordered regions span residues 65–88 (DEEE…GQES) and 155–175 (DEEM…AVAA). Polar residues predominate over residues 73-88 (NGVQTNGDRQTHGQES). Positions 155 to 168 (DEEMEEDGEQEQEQ) are enriched in acidic residues. Positions 207-426 (PSVTSSRYLN…YRLPLCKYMD (220 aa)) constitute an RMT2 domain. S-adenosyl-L-methionine-binding positions include Tyr214, Met243, 263 to 268 (HGMGIV), 284 to 286 (EAH), 311 to 312 (WQ), and Asp331.

Belongs to the class I-like SAM-binding methyltransferase superfamily. RMT2 methyltransferase family. As to quaternary structure, monomer.

Its subcellular location is the cytoplasm. It localises to the nucleus. S-adenosyl-L-methionine-dependent protein-arginine N-methyltransferase that methylates the delta-nitrogen atom of arginine residues to form N5-methylarginine (type IV) in target proteins. Monomethylates ribosomal protein L12. The polypeptide is Protein arginine N-methyltransferase 2 (Emericella nidulans (strain FGSC A4 / ATCC 38163 / CBS 112.46 / NRRL 194 / M139) (Aspergillus nidulans)).